Here is a 102-residue protein sequence, read N- to C-terminus: Large ribosomal subunit protein bL21 (102 aa).

The protein belongs to the bacterial ribosomal protein bL21 family. In terms of assembly, part of the 50S ribosomal subunit. Contacts protein L20.

In terms of biological role, this protein binds to 23S rRNA in the presence of protein L20. This Latilactobacillus sakei subsp. sakei (strain 23K) (Lactobacillus sakei subsp. sakei) protein is Large ribosomal subunit protein bL21.